Here is a 284-residue protein sequence, read N- to C-terminus: Bifunctional protein FolD 1 (284 aa).

NADP(+) is bound by residues 166 to 168 (GAS), S191, and I232.

Belongs to the tetrahydrofolate dehydrogenase/cyclohydrolase family. As to quaternary structure, homodimer.

The enzyme catalyses (6R)-5,10-methylene-5,6,7,8-tetrahydrofolate + NADP(+) = (6R)-5,10-methenyltetrahydrofolate + NADPH. It carries out the reaction (6R)-5,10-methenyltetrahydrofolate + H2O = (6R)-10-formyltetrahydrofolate + H(+). Its pathway is one-carbon metabolism; tetrahydrofolate interconversion. In terms of biological role, catalyzes the oxidation of 5,10-methylenetetrahydrofolate to 5,10-methenyltetrahydrofolate and then the hydrolysis of 5,10-methenyltetrahydrofolate to 10-formyltetrahydrofolate. In Hydrogenovibrio crunogenus (strain DSM 25203 / XCL-2) (Thiomicrospira crunogena), this protein is Bifunctional protein FolD 1.